The following is a 494-amino-acid chain: Serine/threonine-protein kinase PBL13 (494 aa).

C4 carries S-palmitoyl cysteine lipidation. A Phosphothreonine modification is found at T65. In terms of domain architecture, Protein kinase spans 76–356 (FSSSNFLGEG…STVVSVLQDI (281 aa)). Residues 82–90 (LGEGGFGPV) and K111 each bind ATP. At Y156 the chain carries Phosphotyrosine. Residue D206 is the Proton acceptor of the active site. The residue at position 210 (S210) is a Phosphoserine. A Phosphoserine; by autocatalysis modification is found at S240. T241 and T246 each carry phosphothreonine. At Y254 the chain carries Phosphotyrosine. At S321 the chain carries Phosphoserine; by autocatalysis. A phosphothreonine; by autocatalysis mark is found at T323 and T383. Phosphoserine; by autocatalysis is present on S384. A phosphothreonine; by autocatalysis mark is found at T395, T398, T406, T413, T421, and T428. S429 is modified (phosphoserine; by autocatalysis). The tract at residues 434 to 471 (DKTRREVKETSLQNFDKPRNVSTTDNHQKFRSPAHTAR) is disordered. Phosphothreonine; by autocatalysis is present on T443. The span at 443–458 (TSLQNFDKPRNVSTTD) shows a compositional bias: polar residues. Residues S444 and S455 each carry the phosphoserine; by autocatalysis modification. T456 is modified (phosphothreonine; by autocatalysis). Residues 462-471 (KFRSPAHTAR) are compositionally biased toward basic residues. Y481 is modified (phosphotyrosine; by autocatalysis).

The protein belongs to the protein kinase superfamily. Ser/Thr protein kinase family. In terms of assembly, interacts with RBHOD. Interaction is disrupted by flagellin-induced immune signaling.

It is found in the cell membrane. It carries out the reaction L-seryl-[protein] + ATP = O-phospho-L-seryl-[protein] + ADP + H(+). The enzyme catalyses L-threonyl-[protein] + ATP = O-phospho-L-threonyl-[protein] + ADP + H(+). Its function is as follows. Involved in defense responses. Acts as a negative regulator of plant immune responses. This chain is Serine/threonine-protein kinase PBL13, found in Arabidopsis thaliana (Mouse-ear cress).